The following is a 178-amino-acid chain: Endothelin-2 (178 aa).

The signal sequence occupies residues methionine 1 to glycine 24. Positions glutamine 25–proline 46 are excised as a propeptide. 2 disulfides stabilise this stretch: cysteine 49–cysteine 63 and cysteine 51–cysteine 59. The propeptide occupies valine 70–threonine 178. The endothelin-like stretch occupies residues cysteine 96–histidine 111. The segment at alanine 158 to threonine 178 is disordered. The segment covering glutamine 160–arginine 169 has biased composition (basic and acidic residues).

This sequence belongs to the endothelin/sarafotoxin family.

It is found in the secreted. Its function is as follows. Endothelins are endothelium-derived vasoconstrictor peptides. The sequence is that of Endothelin-2 (EDN2) from Mustela putorius furo (European domestic ferret).